The following is a 356-amino-acid chain: GTPase Obg (356 aa).

Positions 1–159 (MKFLDEAKVY…RWIWLRMKLI (159 aa)) constitute an Obg domain. The OBG-type G domain occupies 160 to 327 (ADAGLVGLPN…VLRALTDVIS (168 aa)). GTP-binding positions include 166–173 (GLPNAGKS), 191–195 (FTTLH), 212–215 (DIPG), 279–282 (NKID), and 308–310 (SGV). Mg(2+) contacts are provided by serine 173 and threonine 193. Residues 329-356 (APVSTKAKGEPTENETPPPSTGWSPLSN) are disordered.

It belongs to the TRAFAC class OBG-HflX-like GTPase superfamily. OBG GTPase family. In terms of assembly, monomer. The cofactor is Mg(2+).

Its subcellular location is the cytoplasm. In terms of biological role, an essential GTPase which binds GTP, GDP and possibly (p)ppGpp with moderate affinity, with high nucleotide exchange rates and a fairly low GTP hydrolysis rate. Plays a role in control of the cell cycle, stress response, ribosome biogenesis and in those bacteria that undergo differentiation, in morphogenesis control. The protein is GTPase Obg of Afipia carboxidovorans (strain ATCC 49405 / DSM 1227 / KCTC 32145 / OM5) (Oligotropha carboxidovorans).